A 409-amino-acid polypeptide reads, in one-letter code: Multifunctional CCA protein (409 aa).

The ATP site is built by Gly-8 and Arg-11. CTP-binding residues include Gly-8 and Arg-11. Residues Glu-21 and Asp-23 each contribute to the Mg(2+) site. ATP is bound by residues Arg-91, Arg-137, and Arg-140. The CTP site is built by Arg-91, Arg-137, and Arg-140. An HD domain is found at 228–329 (TGVHTLMVLT…LKALEGLDAF (102 aa)).

This sequence belongs to the tRNA nucleotidyltransferase/poly(A) polymerase family. Bacterial CCA-adding enzyme type 1 subfamily. As to quaternary structure, monomer. Can also form homodimers and oligomers. It depends on Mg(2+) as a cofactor. Requires Ni(2+) as cofactor.

It catalyses the reaction a tRNA precursor + 2 CTP + ATP = a tRNA with a 3' CCA end + 3 diphosphate. The catalysed reaction is a tRNA with a 3' CCA end + 2 CTP + ATP = a tRNA with a 3' CCACCA end + 3 diphosphate. Functionally, catalyzes the addition and repair of the essential 3'-terminal CCA sequence in tRNAs without using a nucleic acid template. Adds these three nucleotides in the order of C, C, and A to the tRNA nucleotide-73, using CTP and ATP as substrates and producing inorganic pyrophosphate. tRNA 3'-terminal CCA addition is required both for tRNA processing and repair. Also involved in tRNA surveillance by mediating tandem CCA addition to generate a CCACCA at the 3' terminus of unstable tRNAs. While stable tRNAs receive only 3'-terminal CCA, unstable tRNAs are marked with CCACCA and rapidly degraded. This chain is Multifunctional CCA protein, found in Thioalkalivibrio sulfidiphilus (strain HL-EbGR7).